Reading from the N-terminus, the 304-residue chain is MLFEQIAANKRKTIFIILGFFIFVLMVGAAIGIIVWNNYLNGLVLAAVIGAFYILIMVMSSSSVVMAMNHAKEVTSKEQAPVLWDTVESMAMVAGIPMPKVYIVEDPSPNAFATGISPEKGAVAVTRGLLNKLERYELEGVIAHEISHIRNYDIRLSTIAIALVAVIAILSDIAMRMIFWGSLTGGRNNRKSDNNNSGGAQAIIYIVALIFVILAPIIATAIQFALSRNREYLADASAVELTRNPDGLIQALQKISGDSKKMEEVSASSESIYFSSPLKSKKNKPGLFDSHPPISSRIERLENM.

2 consecutive transmembrane segments (helical) span residues 14 to 34 (IFIILGFFIFVLMVGAAIGII) and 39 to 59 (YLNGLVLAAVIGAFYILIMVM). Zn(2+) is bound at residue H144. E145 is an active-site residue. Residue H148 coordinates Zn(2+). Helical transmembrane passes span 159-179 (IAIALVAVIAILSDIAMRMIF) and 202-222 (AIIYIVALIFVILAPIIATAI). E231 is a binding site for Zn(2+).

It belongs to the peptidase M48B family. Requires Zn(2+) as cofactor.

The protein resides in the cell membrane. This Listeria monocytogenes serovar 1/2a (strain ATCC BAA-679 / EGD-e) protein is Protease HtpX homolog.